Consider the following 642-residue polypeptide: MYPAGPPAGPVPRRGRRPLPGPPAPAPAPVPAARPPPPAPGPRPRVAVKMAFRKAYSIKDKLQAIERVKGGERQASVCRDFGVPGGTLRGWLKDEPKLRWFLEQLGGEVGTQRKKMRLANEEEIDRAVYAWFLALRQHGVPLSGPLIQAQAEAFARQIYGPECTFKASHGWFWRWQKRHGISSQRFYGEAGPPAPSPAPGPPVKEEPALPSGAGPLPDRAPAPPPPAEGGYGDEQIYSASVTGLYWKLLPEQAAPPGAGDPGAGGCGRRWRGDRVTVLLAANLTGSHKLKPLVIGRLPDPPSLRHHNQDKFPASYRYSPDAWLSRPLLRGWFFEEFVPGVKRYLRRSCLQQKAVLLVAHPPCPSPAASMPALDSEDAPVRCRPEPLGPPEELQTPDGAVRVLFLSKGSSRAHIPAPLEQGVVAAFKQLYKRELLRLAVSCASGSPLDFMRSFMLKDMLYLAGLSWDLVQAGSIERCWLLGLRAAFEPRPGEDSAGQPAQAEEAAEHSRVLSDLTHLAALAYKCLAPEEVAEWLHLDDDGGPPEGCREEVGPALPPAAPPAPASLPSAMGGGEDEEEATDYGGTSVPTAGEAVRGLETALRWLENQDPREVGPLRLVQLRSLISMARRLGGIGHTPAGPYDGV.

Composition is skewed to pro residues over residues 1-10 (MYPAGPPAGP) and 19-43 (LPGP…PGPR). The disordered stretch occupies residues 1-45 (MYPAGPPAGPVPRRGRRPLPGPPAPAPAPVPAARPPPPAPGPRPR). Residues 47-98 (AVKMAFRKAYSIKDKLQAIERVKGGERQASVCRDFGVPGGTLRGWLKDEPKL) enclose the HTH psq-type domain. 2 DNA-binding regions (H-T-H motif) span residues 74–94 (QASV…WLKD) and 145–178 (PLIQ…WQKR). One can recognise an HTH CENPB-type domain in the interval 112-185 (QRKKMRLANE…QKRHGISSQR (74 aa)). Residues 185-233 (RFYGEAGPPAPSPAPGPPVKEEPALPSGAGPLPDRAPAPPPPAEGGYGD) are disordered. Composition is skewed to pro residues over residues 192–202 (PPAPSPAPGPP) and 218–227 (DRAPAPPPPA). 2 DDE-1 domains span residues 233-357 (DEQI…VLLV) and 410-477 (RAHI…ERCW). The segment at 535-587 (LDDDGGPPEGCREEVGPALPPAAPPAPASLPSAMGGGEDEEEATDYGGTSVPT) is disordered. Over residues 552–562 (ALPPAAPPAPA) the composition is skewed to pro residues.

It belongs to the tigger transposable element derived protein family.

The protein localises to the nucleus. The sequence is that of Tigger transposable element-derived protein 5 (TIGD5) from Homo sapiens (Human).